Consider the following 95-residue polypeptide: Aspartyl/glutamyl-tRNA(Asn/Gln) amidotransferase subunit C (95 aa).

This sequence belongs to the GatC family. In terms of assembly, heterotrimer of A, B and C subunits.

It carries out the reaction L-glutamyl-tRNA(Gln) + L-glutamine + ATP + H2O = L-glutaminyl-tRNA(Gln) + L-glutamate + ADP + phosphate + H(+). It catalyses the reaction L-aspartyl-tRNA(Asn) + L-glutamine + ATP + H2O = L-asparaginyl-tRNA(Asn) + L-glutamate + ADP + phosphate + 2 H(+). Allows the formation of correctly charged Asn-tRNA(Asn) or Gln-tRNA(Gln) through the transamidation of misacylated Asp-tRNA(Asn) or Glu-tRNA(Gln) in organisms which lack either or both of asparaginyl-tRNA or glutaminyl-tRNA synthetases. The reaction takes place in the presence of glutamine and ATP through an activated phospho-Asp-tRNA(Asn) or phospho-Glu-tRNA(Gln). In Methylobacterium nodulans (strain LMG 21967 / CNCM I-2342 / ORS 2060), this protein is Aspartyl/glutamyl-tRNA(Asn/Gln) amidotransferase subunit C.